The chain runs to 623 residues: MSKVIGIDLGTTNSCVAVYERGESKVIPNKEGKNTTPSVVAFTDKGEVLVGDSAKRQAVTNPEKTIYSIKRIMGLMINEDAAKEAKTRLPYHITERNGACAIEIAGKIYTPQEISAKVLMKLKEDAEAFLGESVVDAVITVPAYFNDAQRKATKEAGTIAGLNVLRIINEPTSAALAYGLDKKDSEKIVVYDLGGGTFDVTVLETGDNVVEVLATGGNAFLGGDDFDNKLIDFLANEFKDETGIDLKNDVMALQRLKEAAENAKKELSSANETEINLPFITADASGPKHLVKKLTRAKFEGMIDSLVAETITKINEVVSDAGLKKDEIKEVVMVGGSTRVPLVQEEVKKTFNKDLNKSVNPDEVVAIGAAIQGAVIKGDVKDVLLLDVTPLSLGIETLGGVMTKIIEKGTTIPTKKEQVFSTAEDNQSAVTINVLQGEREFSRDNKSLGNFNLEGIPPAPRGMPQIEVTFDIDANGILTVSAKDKATGKAQEIKITGSSGLSEEEINNMVKDAELHKEEDKKRKEAVDVRNAADSLAHQVEKSLSELGEKVATADKENIQKALDDLRETLKNQNASKEEIESKMKALSEVSHKLAENMYKKDEPNTANDKKKKDDDVIDAEVE.

Thr197 carries the post-translational modification Phosphothreonine; by autocatalysis. Basic and acidic residues predominate over residues 595 to 615 (AENMYKKDEPNTANDKKKKDD). The disordered stretch occupies residues 595–623 (AENMYKKDEPNTANDKKKKDDDVIDAEVE).

This sequence belongs to the heat shock protein 70 family.

In terms of biological role, acts as a chaperone. The polypeptide is Chaperone protein DnaK (Campylobacter jejuni subsp. doylei (strain ATCC BAA-1458 / RM4099 / 269.97)).